A 110-amino-acid polypeptide reads, in one-letter code: Phosphoribosyl-ATP pyrophosphatase (110 aa).

This sequence belongs to the PRA-PH family.

The protein localises to the cytoplasm. It catalyses the reaction 1-(5-phospho-beta-D-ribosyl)-ATP + H2O = 1-(5-phospho-beta-D-ribosyl)-5'-AMP + diphosphate + H(+). It participates in amino-acid biosynthesis; L-histidine biosynthesis; L-histidine from 5-phospho-alpha-D-ribose 1-diphosphate: step 2/9. The sequence is that of Phosphoribosyl-ATP pyrophosphatase (hisE) from Azotobacter chroococcum mcd 1.